The primary structure comprises 381 residues: Dof zinc finger protein 2 (381 aa).

A disordered region spans residues 19–81 (MLMGANPNPN…ARPQKEKALN (63 aa)). Low complexity-rich tracts occupy residues 23-32 (ANPNPNGSSN) and 40-59 (SAASAQRPIAPPAAGAAAGA). Over residues 68–79 (TERRARPQKEKA) the composition is skewed to basic and acidic residues. A Dof-type zinc finger spans residues 80–134 (LNCPRCNSTNTKFCYYNNYSLQQPRYFCKTCRRYWTEGGSLRNVPVGGGSRKNKR). Zn(2+)-binding residues include C82, C85, C107, and C110. The segment at 329-349 (AGDANSGGDHQYDHGKNQGGG) is disordered.

It is found in the nucleus. Transcription factor that may transactivate seed storage protein genes in developing seeds. The sequence is that of Dof zinc finger protein 2 from Oryza sativa subsp. japonica (Rice).